A 214-amino-acid chain; its full sequence is MTTLADLRINYSRASLDEADAAPDPFAQFDRWFKEALAAKLPEPNTMTLATVGADGRPSARIVLIKGVDERGFVFFTNYESRKGHDLAVHPQAALLFYWIELERQVRIEGRIEKTSAEESDRYFASRPLGSRIGAWASEQSAVIDSRATLEAREKAVSERYGDNPPRPPHWGGYRLVPDSIEFWQGRPSRLHDRLLYTRDAAAASGWTISRLSP.

Substrate-binding positions include 8-11 (RINY) and Lys66. Residues 61–66 (RIVLIK), 76–77 (FT), Arg82, Lys83, and Gln105 each bind FMN. Substrate contacts are provided by Tyr123, Arg127, and Ser131. Residues 140 to 141 (QS) and Trp184 contribute to the FMN site. Residue 190 to 192 (RLH) coordinates substrate. Arg194 contributes to the FMN binding site.

This sequence belongs to the pyridoxamine 5'-phosphate oxidase family. In terms of assembly, homodimer. FMN is required as a cofactor.

The enzyme catalyses pyridoxamine 5'-phosphate + O2 + H2O = pyridoxal 5'-phosphate + H2O2 + NH4(+). The catalysed reaction is pyridoxine 5'-phosphate + O2 = pyridoxal 5'-phosphate + H2O2. It functions in the pathway cofactor metabolism; pyridoxal 5'-phosphate salvage; pyridoxal 5'-phosphate from pyridoxamine 5'-phosphate: step 1/1. The protein operates within cofactor metabolism; pyridoxal 5'-phosphate salvage; pyridoxal 5'-phosphate from pyridoxine 5'-phosphate: step 1/1. Catalyzes the oxidation of either pyridoxine 5'-phosphate (PNP) or pyridoxamine 5'-phosphate (PMP) into pyridoxal 5'-phosphate (PLP). This is Pyridoxine/pyridoxamine 5'-phosphate oxidase from Burkholderia cenocepacia (strain HI2424).